The chain runs to 301 residues: Inosose dehydratase (301 aa).

The protein belongs to the IolE/MocC family. The cofactor is glutathione. It depends on Co(2+) as a cofactor. Mn(2+) serves as cofactor.

The catalysed reaction is scyllo-inosose = 3D-3,5/4-trihydroxycyclohexane-1,2-dione + H2O. In terms of biological role, catalyzes the dehydration of inosose (2-keto-myo-inositol, 2KMI or 2,4,6/3,5-pentahydroxycyclohexanone) to 3D-(3,5/4)-trihydroxycyclohexane-1,2-dione (D-2,3-diketo-4-deoxy-epi-inositol). In Salmonella typhimurium (strain LT2 / SGSC1412 / ATCC 700720), this protein is Inosose dehydratase.